The sequence spans 365 residues: Pectate trisaccharide-lyase (365 aa).

An N-terminal signal peptide occupies residues 1 to 25 (MRFSRVVSLVLLLVFTAVLTGAVKA). Ca(2+) is bound by residues Asp142, Asp164, and Asp168. Residues 149–171 (SHHIWIDHCTFVNGNDGAVDIKK) form a PbH1 1 repeat. Arg222 is an active-site residue. A PbH1 2 repeat occupies 261-287 (GAKVHVEGNYFMGYGAVMAEAGIAFLP).

Belongs to the polysaccharide lyase 1 family. In terms of assembly, homotetramer. It depends on Ca(2+) as a cofactor.

It is found in the secreted. It carries out the reaction eliminative cleavage of unsaturated trigalacturonate as the major product from the reducing end of polygalacturonic acid/pectate.. Its function is as follows. Cleaves unsaturated trigalacturonate from pectin. Activity is highest towards polygalacturonic acid, activity on methylated pectins decreases with an increasing degree of methylation. In Thermotoga sp. (strain RQ2), this protein is Pectate trisaccharide-lyase.